The primary structure comprises 526 residues: Probable polyol transporter 4 (526 aa).

Disordered regions lie at residues 1–21 and 28–47; these read MMKN…AVSV and YQRM…AEAR. Residues 29-47 show a composition bias toward basic and acidic residues; the sequence is QRMDSDAEESQNHREAEAR. The next 12 membrane-spanning stretches (helical) occupy residues 63 to 83, 92 to 112, 125 to 145, 153 to 173, 180 to 200, 215 to 235, 300 to 320, 340 to 360, 371 to 391, 395 to 415, 437 to 457, and 465 to 485; these read SLNN…VLFI, VQTE…SLAG, MALA…APSF, TLAG…IAEI, GFFT…GYVS, IMLA…CVIP, MLIV…DATV, AATV…TFLI, VSTI…TFLG, LGIT…SIGM, ALGA…FLSV, and GTFF…YVLV.

It belongs to the major facilitator superfamily. Sugar transporter (TC 2.A.1.1) family.

The protein localises to the membrane. Its function is as follows. Plasma membrane sugar-proton symporter. In Arabidopsis thaliana (Mouse-ear cress), this protein is Probable polyol transporter 4 (PLT4).